The primary structure comprises 496 residues: MDISISWVVIIVSVLSYLILMDKWRAAKLPKNIPPGPPKLPLIGHLHLLRGGLPQHLLRGITQKYGPVAHVQLGELFSVVLSSTEAARQAMKVLDPNFADRFVNIGSRIMWYDSEDIIFSRYNDHWRQIRKICVSELLSPKNVRSFGYIRQDEMASLIRLFESSEGKPVNVSEEISKTVCTIVSRVAFGSAVKDQSLLLNLVKESLRMASGFELADLFPSSWLLNLLCFNKYRLWRMRARLDNFLDGFLEEHRVKKSGEFGGEDIIDVLYRMQKDSQMKVPITNNGIKGFIYDVFSAGTDTSAATILWALSELMRYPEKMAKAQAEVRESLKGKTNVDLTEVHELKYLRSVVKEALRLHPPFPMIPRLCVQESEVTGYTIPANTRILINVWSIGRDPLYWEDPDTFNPDRYDEVPRDIIGNDFELIPFGSGRRICPGLHFGLANIEVPLAQLLYHFDWKLPPGMTAADIDMTEKTGLSGPRKNPLILVPIIHNPTS.

A helical; Signal-anchor for type II membrane protein transmembrane segment spans residues 1 to 21; it reads MDISISWVVIIVSVLSYLILM. C435 contacts heme.

Belongs to the cytochrome P450 family. Requires heme as cofactor.

It is found in the membrane. Its pathway is secondary metabolite biosynthesis; terpenoid biosynthesis. Functionally, involved in the biosynthesis of phenolic monoterpenes natural products thymol and carvacrol which have a broad range of biological activities acting as antimicrobial compounds, insecticides, antioxidants and pharmaceutical agents. Catalyzes probably the C3-hydroxylation of gamma-terpinene to produce thymol. In Thymus vulgaris (Thyme), this protein is Cytochrome P450 71D179.